We begin with the raw amino-acid sequence, 345 residues long: Tryptophan--tRNA ligase (345 aa).

Residues 21 to 23 and 30 to 31 each bind ATP; these read QPT and GN. The 'HIGH' region signature appears at 22–31; sequence PTADSYHLGN. Asp147 is a binding site for L-tryptophan. ATP is bound by residues 159-161, Ile198, and 207-211; these read GED and KMSKS. The short motif at 207–211 is the 'KMSKS' region element; that stretch reads KMSKS.

Belongs to the class-I aminoacyl-tRNA synthetase family. Homodimer.

It localises to the cytoplasm. It catalyses the reaction tRNA(Trp) + L-tryptophan + ATP = L-tryptophyl-tRNA(Trp) + AMP + diphosphate + H(+). In terms of biological role, catalyzes the attachment of tryptophan to tRNA(Trp). The polypeptide is Tryptophan--tRNA ligase (Corynebacterium glutamicum (strain ATCC 13032 / DSM 20300 / JCM 1318 / BCRC 11384 / CCUG 27702 / LMG 3730 / NBRC 12168 / NCIMB 10025 / NRRL B-2784 / 534)).